Reading from the N-terminus, the 1726-residue chain is Merozoite surface protein 1 (1726 aa).

Positions 1-19 are cleaved as a signal peptide; it reads MKIIFFLCSFLFFIINTQC. Over residues 61-124 the composition is skewed to low complexity; it reads KGASAQSGTS…SGTSGTSPSS (64 aa). Residues 61-149 are disordered; sequence KGASAQSGTS…PPADASDSDA (89 aa). Residues 125–134 are compositionally biased toward polar residues; it reads RSNTLPRSNT. A glycan (N-linked (GlcNAc...) asparagine) is linked at N133. The span at 135 to 144 shows a compositional bias: low complexity; that stretch reads SSGASPPADA. Residues N272, N501, N567, and N638 are each glycosylated (N-linked (GlcNAc...) asparagine). Residues 735 to 771 form a disordered region; it reads SETTEDGGHSTHTLSQSGETEVTEETEETEETVGHTT. The segment covering 755 to 765 has biased composition (acidic residues); that stretch reads EVTEETEETEE. N-linked (GlcNAc...) asparagine glycosylation is found at N827, N924, N944, N990, N1016, N1114, and N1221. Positions 914 to 952 are enriched in low complexity; the sequence is TGTSSTSSPGNTTVNTAQSATHSNSQNQQSNASSTNTQN. The tract at residues 914 to 961 is disordered; sequence TGTSSTSSPGNTTVNTAQSATHSNSQNQQSNASSTNTQNGVAVSSGPA. Disordered regions lie at residues 1254 to 1284 and 1476 to 1497; these read VTPP…TQIP and KEKF…DEQK. Residues 1270–1284 are compositionally biased toward polar residues; that stretch reads VSGSSGSTKEETQIP. Residues 1481 to 1490 show a composition bias toward pro residues; sequence SSPPTTPPSP. A glycan (N-linked (GlcNAc...) asparagine) is linked at N1613. 2 EGF-like domains span residues 1617–1657 and 1658–1705; these read HQCV…VENP and NPTC…IFCS. 6 cysteine pairs are disulfide-bonded: C1619–C1630, C1624–C1640, C1642–C1653, C1661–C1674, C1668–C1688, and C1690–C1704. S1705 carries the GPI-anchor amidated serine lipid modification. Positions 1706–1726 are cleaved as a propeptide — removed in mature form; it reads SSNFLGISFLLILMLILYSFI.

In terms of assembly, forms a complex composed of subunits p83, p30, p38, and p42 which remain non-covalently associated; the complex is formed at the merozoite surface prior to egress from host erythrocytes. Forms a complex composed of processed MSP1 subunits, MSP6 subunit p36 and MSP7; the complex is formed at the merozoite surface prior to egress from host erythrocytes. Within the complex, interacts (via subunit p38) with MSP6 subunit p36 and (via subunits p83, p30 and p38) with MSP7 (via subunit p22). Forms a complex composed of MSP1, MSP6, DBLMSP1 and DBLMSP2. Within the complex, interacts (via subunit p38) with DBLMSP1 and DBLMSP2. Forms a complex composed of MSP1, and rhoptry proteins RhopH3, RAP1 and CLAG9/RhopH3. Within the complex, interacts (via subunits p42 and p19) with RhopH3 (via C-terminus). Forms a complex composed of MSP1, MSP6, MSP7, MSP9 and MSP3; within the complex, MSP6 and MSP9 mediate the binding to the host erythrocyte. Interacts (via subunits p19 and p42) with MSP9; the interaction is direct; MSP1 subunits p19 or p42, and MSP9 form a co-ligand complex that interacts with host SLC4A1/Band 3 protein. May interact with PFD6. Interacts with host spectrin. Interacts with host glycophorin GYPA in a sialic acid-independent manner. As to quaternary structure, interacts with host proinflammatory cytokine S100P; the interaction blocks S100P inflammatory and chemotactic activities. In terms of assembly, interacts with host SLC4A1/Band 3 (via 5ABC region) on the host erythrocyte surface in a sialic acid-independent manner. Post-translationally, the p190 precursor is cleaved by SUB1 prior to merozoite egress into 4 subunits p83, p30, p38, and p42 which remain non-covalently associated. SUB1-mediated proteolytic cleavage occurs in an orderly manner; the first cleavage occurs at the p30/p38 site, followed by cleavage at the p83/p30 site, the last cleavage occurs at the p38/p42 site. The order of cleavage is essential for parasite viability. SUB1-mediated processing is essential for merozoite egress. In a second processing step during erythrocyte invasion, p42 is cleaved by SUB2 into p33 and p19; the latter remains attached to the merozoite surface via its GPI-anchor and is endocytosed during the subsequent ring stage.

The protein resides in the cell membrane. It localises to the secreted. Its subcellular location is the vacuole membrane. Functionally, during the asexual blood stage, involved in merozoite egress from host erythrocytes possibly via its interaction with the host cytoskeleton protein spectrin resulting in the destabilization of the host cytoskeleton and thus leading to erythrocyte cell membrane rupture. Involved in the binding to host erythrocytes and is required for host erythrocyte invasion. By binding to host proinflammatory cytokine S100P may interfere with host immune responses. In terms of biological role, involved in merozoite invasion of host erythrocytes. May play a role in the biogenesis and/or function of the food vacuole during the intraerythrocytic development. The sequence is that of Merozoite surface protein 1 from Plasmodium falciparum (isolate Palo Alto / Uganda).